We begin with the raw amino-acid sequence, 266 residues long: F-actin-capping protein subunit beta (266 aa).

This sequence belongs to the F-actin-capping protein beta subunit family. Component of the F-actin capping complex, composed of a heterodimer of an alpha and a beta subunit.

Its subcellular location is the cytoplasm. It localises to the cytoskeleton. The protein resides in the actin patch. Functionally, F-actin-capping proteins bind in a Ca(2+)-independent manner to the fast growing ends of actin filaments (barbed end) thereby blocking the exchange of subunits at these ends. Unlike other capping proteins (such as gelsolin and severin), these proteins do not sever actin filaments. This chain is F-actin-capping protein subunit beta (cap2), found in Aspergillus oryzae (strain ATCC 42149 / RIB 40) (Yellow koji mold).